The chain runs to 196 residues: Inner membrane protein YdjM (196 aa).

At 1–23 (MTAEGHLLFSIACAVFAKNAELT) the chain is on the periplasmic side. The helical transmembrane segment at 24 to 44 (PVLAQGDWWHIVPSAILTCLL) threads the bilayer. Over 45-77 (PDIDHPKSFLGQRLKWISKPIARAFGHRGFTHS) the chain is Cytoplasmic. The chain crosses the membrane as a helical span at residues 78–98 (LLAVFALLATFYLKVPEGWFI). Topologically, residues 99–106 (PADALQGM) are periplasmic. Residues 107 to 127 (VLGYLSHILADMLTPAGVPLL) form a helical membrane-spanning segment. Over 128-149 (WPCRWRFRLPILVPQKGNQLER) the chain is Cytoplasmic. Residues 150–170 (FICMALFVWSVWMPHSLPENS) traverse the membrane as a helical segment. At 171–196 (AVRWSSQMINTLQIQFHRLIKHQVEY) the chain is on the periplasmic side.

It to B.subtilis YvsG.

It localises to the cell inner membrane. The protein is Inner membrane protein YdjM (ydjM) of Escherichia coli (strain K12).